Reading from the N-terminus, the 981-residue chain is Helicase-like transcription factor CHR28 (981 aa).

Disordered regions lie at residues 1 to 66 (MDSA…LDSR) and 112 to 194 (KRTH…RNSE). Residues 46 to 65 (SGSSSGANGHTKTGLTNLDS) show a composition bias toward polar residues. Over residues 119-128 (FSRPPFPPRP) the composition is skewed to pro residues. Over residues 166-176 (HGTSASPSHFN) the composition is skewed to polar residues. The segment covering 181-194 (PMHRNGIGEERNSE) has biased composition (basic and acidic residues). One can recognise a Helicase ATP-binding domain in the interval 241–526 (ETNSLHCMGG…YSYFRFLKYD (286 aa)). Residue 254 to 261 (DDQGLGKT) participates in ATP binding. Disordered stretches follow at residues 293 to 337 (DADD…RKFN) and 439 to 462 (VVGT…SDPD). Residues 439–451 (VVGTTKKSKKKKG) show a composition bias toward basic residues. The RING-type; degenerate zinc-finger motif lies at 679–718 (CCVCHDPPEDPVVTLCGHIFCYQCVSDYITGDEDTCPAPR). Residues 779-798 (NQGTSNSTQNGQMASSSQQP) show a composition bias toward polar residues. The interval 779 to 808 (NQGTSNSTQNGQMASSSQQPNDDDDDDDDD) is disordered. Residues 799–808 (NDDDDDDDDD) show a composition bias toward acidic residues. The 173-residue stretch at 804-976 (DDDDDVTIVE…ATRLTVDDLK (173 aa)) folds into the Helicase C-terminal domain.

The protein belongs to the SNF2/RAD54 helicase family. RAD16 subfamily. In terms of assembly, interacts with SUVR2.

It is found in the nucleus. In terms of biological role, probable helicase-like transcription factor involved in transcriptional gene silencing. Associates with SUVR2 and contributes to transcriptional gene silencing at RNA-directed DNA methylation (RdDM) target loci but also at RdDM-independent target loci. May be involved in nucleosome positioning to form ordered nucleosome arrays on chromatin. Associates with SUVR2 and functions redundantly with FRG1. Required for the efficient methylation of a broad range of RdDM target loci. The chain is Helicase-like transcription factor CHR28 from Arabidopsis thaliana (Mouse-ear cress).